Reading from the N-terminus, the 43-residue chain is Protein PsbN (43 aa).

A helical membrane pass occupies residues 5–27 (TLVAISISGSLVSFTGYALYTAF).

The protein belongs to the PsbN family.

It localises to the plastid. The protein resides in the chloroplast thylakoid membrane. Its function is as follows. May play a role in photosystem I and II biogenesis. The sequence is that of Protein PsbN from Lactoris fernandeziana.